The sequence spans 640 residues: ESX-3 secretion system protein EccA3 (640 aa).

393 to 400 contacts ATP; sequence GPPGTGKT.

Belongs to the CbxX/CfxQ family. As to quaternary structure, part of the ESX-3 / type VII secretion system (T7SS), which is composed of cytosolic and membrane components.

The protein localises to the cytoplasm. Part of an ESX-3 / type VII specialized secretion system (T7SS), which exports several proteins. EccA3 exhibits ATPase activity and may provide energy for the export of ESX-3 substrates. The polypeptide is ESX-3 secretion system protein EccA3 (Mycobacterium leprae (strain TN)).